A 490-amino-acid chain; its full sequence is Acetyl-coenzyme A carboxylase carboxyl transferase subunit beta, chloroplastic (490 aa).

Residues 184-203 (LNSSENEGSSRRTRTKGSDL) form a disordered region. The CoA carboxyltransferase N-terminal domain maps to 221–490 (LWVQCENCYG…PLNQKSSKIK (270 aa)). Residues Cys225, Cys228, Cys244, and Cys247 each contribute to the Zn(2+) site. The segment at 225 to 247 (CENCYGLNYKKFLKSKMNICEQC) adopts a C4-type zinc-finger fold.

This sequence belongs to the AccD/PCCB family. As to quaternary structure, acetyl-CoA carboxylase is a heterohexamer composed of biotin carboxyl carrier protein, biotin carboxylase and 2 subunits each of ACCase subunit alpha and ACCase plastid-coded subunit beta (accD). Zn(2+) is required as a cofactor. RNA expressed in leaf, root, stem, and tuber; the least expression occurs in stems. RNA persists even in senescent leaves.

Its subcellular location is the plastid. It is found in the chloroplast stroma. It catalyses the reaction N(6)-carboxybiotinyl-L-lysyl-[protein] + acetyl-CoA = N(6)-biotinyl-L-lysyl-[protein] + malonyl-CoA. It participates in lipid metabolism; malonyl-CoA biosynthesis; malonyl-CoA from acetyl-CoA: step 1/1. Functionally, component of the acetyl coenzyme A carboxylase (ACC) complex. Biotin carboxylase (BC) catalyzes the carboxylation of biotin on its carrier protein (BCCP) and then the CO(2) group is transferred by the transcarboxylase to acetyl-CoA to form malonyl-CoA. The protein is Acetyl-coenzyme A carboxylase carboxyl transferase subunit beta, chloroplastic of Solanum tuberosum (Potato).